A 238-amino-acid polypeptide reads, in one-letter code: Zwei Ig domain protein zig-2 (238 aa).

A signal peptide spans 1 to 17; sequence MLKFTAISFVLLNAAES. The 100-residue stretch at 31–130 folds into the Ig-like C2-type 1 domain; that stretch reads PLLKFTRTPN…NGLTKLEHVA (100 aa). Residues N40 and N43 are each glycosylated (N-linked (GlcNAc...) asparagine). The cysteines at positions 54 and 117 are disulfide-linked. 3 N-linked (GlcNAc...) asparagine glycosylation sites follow: N137, N206, and N216. Positions 149-230 constitute an Ig-like C2-type 2 domain; sequence PFISMTVDFR…NHFGETTAIT (82 aa). Cysteines 170 and 217 form a disulfide.

As to expression, expressed in PVT neurons and weakly in some head neurons.

Its subcellular location is the secreted. Its function is as follows. Probably not involved in maintaining the position of ASI and ASH head neuron cell bodies and ventral nerve cord axons of PVQ, PVP, RMEV, AVK and HSN neurons. In Caenorhabditis elegans, this protein is Zwei Ig domain protein zig-2.